The sequence spans 1100 residues: SLIT-ROBO Rho GTPase-activating protein 2 (1100 aa).

Residues 19 to 324 (TQVKEIRAQL…AAENLEANSD (306 aa)) form the F-BAR domain. Coiled-coil stretches lie at residues 170-201 (YNMDSINAESKLKEAEKQEEKQMSRSVRHEEK) and 363-400 (GELIQRCQQLQSRLSTLNIENEEVKKTMEATLQTIQDM). The segment covering 181-203 (LKEAEKQEEKQMSRSVRHEEKQT) has biased composition (basic and acidic residues). The tract at residues 181–210 (LKEAEKQEEKQMSRSVRHEEKQTPRSPDSL) is disordered. In terms of domain architecture, Rho-GAP spans 496–680 (VRKQEAIQII…TIIIHHESIF (185 aa)). Positions 738-797 (SDPIEAIARFDYSGRTNRELSFKKGASLLLYSRASDDWWEGRHNGTEGLVPHQYIVVQDM) constitute an SH3 domain. Disordered regions lie at residues 800-835 (GYAGRGSPKADLEGSHDSVEEKVSTRASASSPTGGH) and 852-938 (EATS…PLDP). Residues 807–823 (PKADLEGSHDSVEEKVS) show a composition bias toward basic and acidic residues. Polar residues predominate over residues 919–932 (RKSTPTGRSKSFSN). Residues 945-972 (EHSSQDIEATMNTALSELRELERQSNVK) are a coiled coil. The interval 986–1100 (KSGGTSEPSS…PPPTDKSCPV (115 aa)) is disordered. Polar residues-rich tracts occupy residues 987–997 (SGGTSEPSSPL) and 1008–1049 (SQHP…GSTF). A compositionally biased stretch (low complexity) spans 1067–1081 (SSSAGGSPAMGSPTT). The span at 1082–1094 (TIPPTPPPPPPPT) shows a compositional bias: pro residues.

It is found in the cell membrane. The protein localises to the cell projection. It localises to the dendritic spine. The protein resides in the postsynaptic density. Its subcellular location is the postsynaptic cell membrane. It is found in the lamellipodium. The protein localises to the cytoplasmic vesicle. It localises to the phagosome. The protein resides in the nucleus. Its subcellular location is the cytoplasm. It is found in the cytosol. In terms of biological role, postsynaptic RAC1 GTPase activating protein (GAP) that plays a key role in neuronal morphogenesis and migration mainly during development of the cerebral cortex. Regulates excitatory and inhibitory synapse maturation and density in cortical pyramidal neurons. Mechanistically, acts by binding and deforming membranes, thereby regulating actin dynamics to regulate cell migration and differentiation. The sequence is that of SLIT-ROBO Rho GTPase-activating protein 2 (srgap2) from Danio rerio (Zebrafish).